The chain runs to 268 residues: tRNA (guanine-N(7)-)-methyltransferase (268 aa).

Residues 1–21 (MMAGAEAPQPQKRYYRQRAHS) are disordered. A Phosphoserine modification is found at serine 21. Glycine 78, glutamate 101, arginine 103, asparagine 134, alanine 135, and leucine 154 together coordinate S-adenosyl-L-methionine. Aspartate 157 is a catalytic residue. The segment at 158–166 (PHFKRTKHK) is alphaC helix. 2 residues coordinate S-adenosyl-L-methionine: threonine 232 and glutamate 234. Residues 232 to 240 (TEEGKKVLR) form an alpha6 helix region.

This sequence belongs to the class I-like SAM-binding methyltransferase superfamily. TrmB family. Catalytic component of the METTL1-WDR4 complex, composed of METTL1 and WDR4. Post-translationally, phosphorylation at Ser-21 by PKB/AKT1 inactivates its methyltransferase activity via a steric interference mechanism in the active site that locally disrupts the catalytic center. Phosphorylation at Ser-21 does not affect the interaction with WDR4.

It localises to the nucleus. It catalyses the reaction guanosine(46) in tRNA + S-adenosyl-L-methionine = N(7)-methylguanosine(46) in tRNA + S-adenosyl-L-homocysteine. It carries out the reaction a guanosine in mRNA + S-adenosyl-L-methionine = an N(7)-methylguanosine in mRNA + S-adenosyl-L-homocysteine. The enzyme catalyses a guanosine in miRNA + S-adenosyl-L-methionine = an N(7)-methylguanosine in miRNA + S-adenosyl-L-homocysteine. It participates in tRNA modification; N(7)-methylguanine-tRNA biosynthesis. Its function is as follows. Catalytic component of METTL1-WDR4 methyltransferase complex that mediates the formation of N(7)-methylguanine in a subset of RNA species, such as tRNAs, mRNAs and microRNAs (miRNAs). Catalyzes the formation of N(7)-methylguanine at position 46 (m7G46) in a large subset of tRNAs that contain the 5'-RAGGU-3' motif within the variable loop. M7G46 interacts with C13-G22 in the D-loop to stabilize tRNA tertiary structure and protect tRNAs from decay. Also acts as a methyltransferase for a subset of internal N(7)-methylguanine in mRNAs. Internal N(7)-methylguanine methylation of mRNAs in response to stress promotes their relocalization to stress granules, thereby suppressing their translation. Also methylates a specific subset of miRNAs, such as let-7. N(7)-methylguanine methylation of let-7 miRNA promotes let-7 miRNA processing by disrupting an inhibitory secondary structure within the primary miRNA transcript (pri-miRNA). Acts as a regulator of embryonic stem cell self-renewal and differentiation. This is tRNA (guanine-N(7)-)-methyltransferase from Mus musculus (Mouse).